A 325-amino-acid polypeptide reads, in one-letter code: Inner membrane protein YrbG (325 aa).

Residues 1 to 5 are Periplasmic-facing; that stretch reads MLLAT. Residues 6–26 form a helical membrane-spanning segment; that stretch reads ALLIVGLLLVVYSADRLVFAA. The Cytoplasmic segment spans residues 27 to 37; it reads SILCRTFGIPP. Residues 38–58 traverse the membrane as a helical segment; the sequence is LIIGMTVVSIGTSLPEVIVSL. At 59–67 the chain is on the periplasmic side; that stretch reads AASLHEQRD. The chain crosses the membrane as a helical span at residues 68 to 88; sequence LAVGTALGSNIINILLILGLA. The Cytoplasmic segment spans residues 89–104; the sequence is ALVRPFTVHSDVLRRE. The chain crosses the membrane as a helical span at residues 105–125; that stretch reads LPLMLLVSVVAGSVLYDGQLS. Position 126 (Arg126) is a topological domain, periplasmic. Residues 127 to 147 traverse the membrane as a helical segment; sequence SDGIFLLFLAVLWLLFIVKLA. At 148-169 the chain is on the cytoplasmic side; the sequence is RQAERQGTDSLTREQLAELPRD. The helical transmembrane segment at 170–190 threads the bilayer; sequence GGLPVAFLWLGIALIIMPVAT. Residues 191 to 198 lie on the Periplasmic side of the membrane; sequence RMVVDNAT. A helical transmembrane segment spans residues 199–219; the sequence is VLANYFAISELTMGLTAIAIG. The Cytoplasmic segment spans residues 220 to 243; it reads TSLPELATAIAGVRKGENDIAVGN. Residues 244 to 264 traverse the membrane as a helical segment; the sequence is IIGANIFNIVIVLGLPALITP. Topologically, residues 265-269 are periplasmic; the sequence is GEIDP. Residues 270-290 form a helical membrane-spanning segment; that stretch reads LAYSRDYSVMLLVSIIFALLC. Topologically, residues 291–302 are cytoplasmic; it reads WRRSPQPGRGVG. The helical transmembrane segment at 303–323 threads the bilayer; that stretch reads VLLTGGFIVWLAMLYWLSPIL. Residues 324–325 are Periplasmic-facing; the sequence is VE.

This sequence belongs to the Ca(2+):cation antiporter (CaCA) (TC 2.A.19) family.

It is found in the cell inner membrane. The polypeptide is Inner membrane protein YrbG (yrbG) (Escherichia coli (strain K12)).